The primary structure comprises 639 residues: Chaperone protein DnaK (639 aa).

Phosphothreonine; by autocatalysis is present on Thr196. Positions 592 to 639 (ASSLYQTPDAGAPGASGPSAGGEPETGKKGGDGEVQNAEYEVIDGNDK) are disordered. A compositionally biased stretch (low complexity) spans 601–613 (AGAPGASGPSAGG).

Belongs to the heat shock protein 70 family.

Its function is as follows. Acts as a chaperone. In Chlorobium limicola (strain DSM 245 / NBRC 103803 / 6330), this protein is Chaperone protein DnaK.